Reading from the N-terminus, the 83-residue chain is RNA-binding protein Hfq (83 aa).

The 60-residue stretch at aspartate 10–valine 69 folds into the Sm domain.

This sequence belongs to the Hfq family. In terms of assembly, homohexamer.

Functionally, RNA chaperone that binds small regulatory RNA (sRNAs) and mRNAs to facilitate mRNA translational regulation in response to envelope stress, environmental stress and changes in metabolite concentrations. Also binds with high specificity to tRNAs. This is RNA-binding protein Hfq from Delftia acidovorans (strain DSM 14801 / SPH-1).